Here is a 1302-residue protein sequence, read N- to C-terminus: 1-phosphatidylinositol 4,5-bisphosphate phosphodiesterase gamma-1 (1302 aa).

At A2 the chain carries N-acetylalanine. Positions 27-142 constitute a PH 1 domain; it reads RSLEVGTVMT…WIKGLTWLME (116 aa). The region spanning 152–187 is the EF-hand domain; sequence QIERWLRKQFYSVDRNREDRISAKDLKNMLSQVNYR. Ca(2+) contacts are provided by D165, N167, E169, R171, and D176. The PI-PLC X-box domain maps to 320 to 464; sequence DTMNNPLSHY…LRRKILIKHK (145 aa). Active-site residues include H335 and H380. The 35-residue stretch at 489–523 folds into the PH 2; first part domain; that stretch reads SIKNGILYLEDPVNHEWYPHYFVLTSSKIYYSEET. At Y506 the chain carries Phosphotyrosine. Positions 522–545 are disordered; the sequence is ETSSDQGNEDEEEPKEASSSTELH. SH2 domains follow at residues 550 to 657 and 668 to 756; these read WFHG…SEPV and WYHA…RYPI. Position 771 is a phosphotyrosine; by SYK (Y771). Y775 bears the Phosphotyrosine mark. A Phosphotyrosine; by ITK, SYK and TXK modification is found at Y783. The SH3 domain maps to 791–851; that stretch reads TFKCAVKALF…PSNYVEEMIN (61 aa). Residues 895–931 form the PH 2; second part domain; sequence FVFSISMPSVAQWSLDVAADSQEELQDWVKKIREVAQ. Residues 953–1070 form the PI-PLC Y-box domain; it reads LSELVVYCRP…GYVLQPSTMR (118 aa). Y977 carries the phosphotyrosine modification. In terms of domain architecture, C2 spans 1071 to 1194; that stretch reads DEAFDPFDKS…TGYRAVPLKN (124 aa). S1221, S1227, S1233, and S1248 each carry phosphoserine. Y1253 bears the Phosphotyrosine mark. Phosphoserine is present on S1263.

As to quaternary structure, interacts (via SH2 domain) with FGFR1, FGFR2, FGFR3 and FGFR4 (phosphorylated). Interacts with RALGPS1. Interacts (via SH2 domains) with VIL1 (phosphorylated at C-terminus tyrosine phosphorylation sites). Interacts (via SH2 domain) with RET. Interacts with AGAP2 via its SH3 domain. Interacts with LAT (phosphorylated) upon TCR activation. Interacts (via SH3 domain) with the Pro-rich domain of TNK1. Associates with BLNK, VAV1, GRB2 and NCK1 in a B-cell antigen receptor-dependent fashion. Interacts with CBLB in activated T-cells; which inhibits phosphorylation. Interacts with SHB. Interacts (via SH3 domain) with the Arg/Gly-rich-flanked Pro-rich domains of KHDRBS1/SAM68. This interaction is selectively regulated by arginine methylation of KHDRBS1/SAM68. Interacts with INPP5D/SHIP1, THEMIS and CLNK. Interacts with FLT4 and KIT. Interacts with AXL. Interacts with SYK; activates PLCG1. Interacts with FLT1 (tyrosine-phosphorylated). Interacts (via SH2 domain) with PDGFRA and PDGFRB (tyrosine phosphorylated). Interacts with PIP5K1C. Interacts with NTRK1 and NTRK2 (phosphorylated upon ligand-binding). Interacts with TESPA1. Interacts with GRB2, LAT and THEMIS upon TCR activation in thymocytes; the association is weaker in the absence of TESPA1. Interacts (via C-terminal proline-rich domain (PRD)) with PLCG1 (via SH3 domain); this interaction leads to guanine nucleotide exchange from PlCG1 to DNM1 and enhances DNM1-dependent endocytosis. It depends on Ca(2+) as a cofactor. In terms of processing, tyrosine phosphorylated in response to signaling via activated FLT3, KIT and PDGFRA. Tyrosine phosphorylated by activated FGFR1, FGFR2, FGFR3 and FGFR4. Tyrosine phosphorylated by activated FLT1 and KDR. Tyrosine phosphorylated by activated PDGFRB. The receptor-mediated activation of PLCG1 involves its phosphorylation by tyrosine kinases in response to ligation of a variety of growth factor receptors and immune system receptors. For instance, SYK phosphorylates and activates PLCG1 in response to ligation of the B-cell receptor. Phosphorylated by ITK and TXK on Tyr-783 upon TCR activation in T-cells. May be dephosphorylated by PTPRJ. Post-translationally, ubiquitinated by CBLB in activated T-cells.

The protein localises to the cell projection. It localises to the lamellipodium. It is found in the ruffle. It carries out the reaction a 1,2-diacyl-sn-glycero-3-phospho-(1D-myo-inositol-4,5-bisphosphate) + H2O = 1D-myo-inositol 1,4,5-trisphosphate + a 1,2-diacyl-sn-glycerol + H(+). The catalysed reaction is a 1,2-diacyl-sn-glycero-3-phospho-(1D-myo-inositol) + H2O = 1D-myo-inositol 1-phosphate + a 1,2-diacyl-sn-glycerol + H(+). Its activity is regulated as follows. Activated by phosphorylation on tyrosine residues. In terms of biological role, mediates the production of the second messenger molecules diacylglycerol (DAG) and inositol 1,4,5-trisphosphate (IP3). Plays an important role in the regulation of intracellular signaling cascades. Becomes activated in response to ligand-mediated activation of receptor-type tyrosine kinases, such as PDGFRA, PDGFRB, EGFR, FGFR1, FGFR2, FGFR3 and FGFR4. Plays a role in actin reorganization and cell migration. Guanine nucleotide exchange factor that binds the GTPase DNM1 and catalyzes the dissociation of GDP, allowing a GTP molecule to bind in its place, therefore enhancing DNM1-dependent endocytosis. The sequence is that of 1-phosphatidylinositol 4,5-bisphosphate phosphodiesterase gamma-1 from Mus musculus (Mouse).